The sequence spans 257 residues: uncharacterized protein (257 aa).

Residues 1-22 (MGYLKRFALYISVMILIFAIAG) form the signal peptide. Residue cysteine 23 is the site of N-palmitoyl cysteine attachment. A lipid anchor (S-diacylglycerol cysteine) is attached at cysteine 23.

Belongs to the staphylococcal tandem lipoprotein family.

It is found in the cell membrane. This is an uncharacterized protein from Staphylococcus aureus (strain USA300).